A 430-amino-acid chain; its full sequence is MVTTLRQTDPDFEQKFAAFLSGKREVSEDVDRAVREIVDRVRREGDSALLDYSRRFDRIDLEKTGIAVTEAEIDAAFDAAPASTVEALKLARDRIEKHHARQLPKDDRYTDALGVELGSRWTAIEAVGLYVPGGTASYPSSVLMNAMPAKVAGVDRIVMVVPAPDGNLNPLVLVAARLAGVSEIYRVGGAQAIAALAYGTETIRPVAKIVGPGNAYVAAAKRIVFGTVGIDMIAGPSEVLIVADKDNNPDWIAADLLAQAEHDMAAQSILMTNDEAFAHAVEEAVERQLHTLARTETASASWRDFGAVILVKDFEDAIPLANRIAAEHLEIAVADAEAFVPRIRNAGSIFIGGYTPEVIGDYVGGCNHVLPTARSARFSSGLSVLDYMKRTSLLKLGSEQLRALGPAAIEIARAEGLDAHAQSVAIRLNL.

Tyr-130, Gln-191, and Asn-214 together coordinate NAD(+). Ser-237, Gln-259, and His-262 together coordinate substrate. The Zn(2+) site is built by Gln-259 and His-262. Residues Glu-327 and His-328 each act as proton acceptor in the active site. Substrate contacts are provided by His-328, Asp-361, Glu-415, and His-420. Asp-361 is a Zn(2+) binding site. His-420 provides a ligand contact to Zn(2+).

The protein belongs to the histidinol dehydrogenase family. Zn(2+) is required as a cofactor.

It catalyses the reaction L-histidinol + 2 NAD(+) + H2O = L-histidine + 2 NADH + 3 H(+). It participates in amino-acid biosynthesis; L-histidine biosynthesis; L-histidine from 5-phospho-alpha-D-ribose 1-diphosphate: step 9/9. Its function is as follows. Catalyzes the sequential NAD-dependent oxidations of L-histidinol to L-histidinaldehyde and then to L-histidine. This chain is Histidinol dehydrogenase, found in Brucella abortus (strain 2308).